We begin with the raw amino-acid sequence, 75 residues long: Exodeoxyribonuclease 7 small subunit (75 aa).

This sequence belongs to the XseB family. As to quaternary structure, heterooligomer composed of large and small subunits.

It is found in the cytoplasm. The catalysed reaction is Exonucleolytic cleavage in either 5'- to 3'- or 3'- to 5'-direction to yield nucleoside 5'-phosphates.. Its function is as follows. Bidirectionally degrades single-stranded DNA into large acid-insoluble oligonucleotides, which are then degraded further into small acid-soluble oligonucleotides. The sequence is that of Exodeoxyribonuclease 7 small subunit from Chlamydia caviae (strain ATCC VR-813 / DSM 19441 / 03DC25 / GPIC) (Chlamydophila caviae).